The primary structure comprises 367 residues: Putative methylthioribose-1-phosphate isomerase (367 aa).

Substrate contacts are provided by residues 65–67 (RGA), R106, and Q218. The active-site Proton donor is the D259. Residue 269–270 (NK) coordinates substrate.

The protein belongs to the eIF-2B alpha/beta/delta subunits family. MtnA subfamily.

The enzyme catalyses 5-(methylsulfanyl)-alpha-D-ribose 1-phosphate = 5-(methylsulfanyl)-D-ribulose 1-phosphate. Its function is as follows. Catalyzes the interconversion of methylthioribose-1-phosphate (MTR-1-P) into methylthioribulose-1-phosphate (MTRu-1-P). This Sulfolobus acidocaldarius (strain ATCC 33909 / DSM 639 / JCM 8929 / NBRC 15157 / NCIMB 11770) protein is Putative methylthioribose-1-phosphate isomerase.